The sequence spans 88 residues: C-C motif chemokine 18 (88 aa).

An N-terminal signal peptide occupies residues 1 to 19 (MKGLAAALLVLCTVALCSC). Cystine bridges form between Cys29/Cys53 and Cys30/Cys69.

The protein belongs to the intercrine beta (chemokine CC) family. In terms of processing, the Cys-29/Cys-53 disulfide bond is required for activity.

It localises to the secreted. Functionally, chemotactic factor that attracts lymphocytes but not monocytes or granulocytes. May be involved in B-cell migration into B-cell follicles in lymph nodes. Attracts naive T-lymphocytes toward dendritic cells and activated macrophages in lymph nodes, has chemotactic activity for naive T-cells, CD4+ and CD8+ T-cells and thus may play a role in both humoral and cell-mediated immunity responses. The sequence is that of C-C motif chemokine 18 (CCL18) from Macaca mulatta (Rhesus macaque).